A 725-amino-acid polypeptide reads, in one-letter code: N-alpha-acetyltransferase 35, NatC auxiliary subunit (725 aa).

The disordered stretch occupies residues 548-573; sequence ERIMEEQQKGRSSKKTKKKKKVRPLS. Positions 558 to 571 are enriched in basic residues; sequence RSSKKTKKKKKVRP.

The protein belongs to the MAK10 family. Component of the N-terminal acetyltransferase C (NatC) complex, which is composed of NAA35, NAA38 and NAA30. As to expression, expressed in primary spermatocytes, basal epidermis, interstitial fibroblasts of skeletal muscle, and intestinal crypts.

Its subcellular location is the cytoplasm. Its function is as follows. Auxillary component of the N-terminal acetyltransferase C (NatC) complex which catalyzes acetylation of N-terminal methionine residues. N-terminal acetylation protects proteins from ubiquitination and degradation by the N-end rule pathway. Involved in regulation of apoptosis and proliferation of smooth muscle cells. This Rattus norvegicus (Rat) protein is N-alpha-acetyltransferase 35, NatC auxiliary subunit (Naa35).